We begin with the raw amino-acid sequence, 152 residues long: Transcriptional repressor NrdR (152 aa).

A zinc finger lies at 3 to 34; it reads CPYCQHPDSDVIDTRKLHNGETIRRRRKCEAC. Residues 49-139 form the ATP-cone domain; the sequence is ITVVKKNGER…VYRSFADIGK (91 aa).

It belongs to the NrdR family. It depends on Zn(2+) as a cofactor.

Negatively regulates transcription of bacterial ribonucleotide reductase nrd genes and operons by binding to NrdR-boxes. In Roseiflexus castenholzii (strain DSM 13941 / HLO8), this protein is Transcriptional repressor NrdR.